We begin with the raw amino-acid sequence, 41 residues long: Large ribosomal subunit protein bL36 (41 aa).

This sequence belongs to the bacterial ribosomal protein bL36 family.

This chain is Large ribosomal subunit protein bL36, found in Zymomonas mobilis subsp. mobilis (strain ATCC 31821 / ZM4 / CP4).